A 402-amino-acid chain; its full sequence is Caspase-1 (402 aa).

Residues 1-91 form the CARD domain; the sequence is MADKVLRAKR…YLAEILELQS (91 aa). The propeptide occupies 1–118; the sequence is MADKVLRAKR…PFSSETKEKL (118 aa). Catalysis depends on residues H236 and C284. A propeptide spanning residues 297 to 314 is cleaved from the precursor; it reads SVGNSEEGFLTDAIFEDD. S301 bears the Phosphoserine mark.

This sequence belongs to the peptidase C14A family. Heterotetramer that consists of two anti-parallel arranged heterodimers, each one formed by a 20 kDa (Caspase-1 subunit p20) and a 10 kDa (Caspase-1 subunit p10) subunit. May be a component of the inflammasome, a protein complex which also includes PYCARD, CARD8 and NLRP2 and whose function would be the activation of pro-inflammatory caspases. Component of the AIM2 PANoptosome complex, a multiprotein complex that drives inflammatory cell death (PANoptosis). Both the p10 and p20 subunits interact with MEFV. Interacts with CARD17P/INCA and CARD18. Interacts with SERPINB1; this interaction regulates CASP1 activity. In terms of assembly, heterotetramer that consists of two anti-parallel arranged heterodimers, each one formed by a 20 kDa (Caspase-1 subunit p20) and a 10 kDa (Caspase-1 subunit p10) subunit. Post-translationally, the two subunits are derived from the precursor sequence by an autocatalytic mechanism. In terms of processing, ubiquitinated via 'Lys-11'-linked polyubiquitination. Deubiquitinated by USP8.

The protein resides in the cytoplasm. It localises to the cell membrane. The catalysed reaction is Strict requirement for an Asp residue at position P1 and has a preferred cleavage sequence of Tyr-Val-Ala-Asp-|-.. Its function is as follows. Thiol protease involved in a variety of inflammatory processes by proteolytically cleaving other proteins, such as the precursors of the inflammatory cytokines interleukin-1 beta (IL1B) and interleukin 18 (IL18) as well as the pyroptosis inducer Gasdermin-D (GSDMD), into active mature peptides. Plays a key role in cell immunity as an inflammatory response initiator: once activated through formation of an inflammasome complex, it initiates a pro-inflammatory response through the cleavage of the two inflammatory cytokines IL1B and IL18, releasing the mature cytokines which are involved in a variety of inflammatory processes. Cleaves a tetrapeptide after an Asp residue at position P1. Also initiates pyroptosis, a programmed lytic cell death pathway, through cleavage of GSDMD. In contrast to cleavage of interleukin IL1B, recognition and cleavage of GSDMD is not strictly dependent on the consensus cleavage site but depends on an exosite interface on CASP1 that recognizes and binds the Gasdermin-D, C-terminal (GSDMD-CT) part. Cleaves and activates CASP7 in response to bacterial infection, promoting plasma membrane repair. Upon inflammasome activation, during DNA virus infection but not RNA virus challenge, controls antiviral immunity through the cleavage of CGAS, rendering it inactive. In apoptotic cells, cleaves SPHK2 which is released from cells and remains enzymatically active extracellularly. The chain is Caspase-1 (Casp1) from Rattus norvegicus (Rat).